A 247-amino-acid chain; its full sequence is ATP synthase subunit a, chloroplastic (247 aa).

A run of 5 helical transmembrane segments spans residues 38-58 (QVLI…AIAV), 95-115 (VPFI…GALL), 134-154 (INTT…AGLT), 199-219 (LVVV…VMFL), and 220-240 (GLFT…AYIG).

It belongs to the ATPase A chain family. F-type ATPases have 2 components, CF(1) - the catalytic core - and CF(0) - the membrane proton channel. CF(1) has five subunits: alpha(3), beta(3), gamma(1), delta(1), epsilon(1). CF(0) has four main subunits: a, b, b' and c.

It localises to the plastid. The protein resides in the chloroplast thylakoid membrane. Functionally, key component of the proton channel; it plays a direct role in the translocation of protons across the membrane. The chain is ATP synthase subunit a, chloroplastic from Calycanthus floridus var. glaucus (Eastern sweetshrub).